The primary structure comprises 136 residues: Probable flagellum biosynthesis repressor protein FlbT 2 (136 aa).

It belongs to the FlbT family.

Has a post-transcriptional repressor function in flagellum biogenesis. Associates with the 5'-UTR of fljK mRNA and promotes its degradation. This chain is Probable flagellum biosynthesis repressor protein FlbT 2, found in Bradyrhizobium diazoefficiens (strain JCM 10833 / BCRC 13528 / IAM 13628 / NBRC 14792 / USDA 110).